The chain runs to 268 residues: Proenkephalin-A (268 aa).

The N-terminal stretch at 1 to 24 (MARFLRLCTWLLALGSCLLATVQA) is a signal peptide. 3 disulfide bridges follow: Cys26-Cys48, Cys30-Cys52, and Cys33-Cys65. Positions 163-184 (TGDNRAKDSHQQESTNNDEDMS) are disordered. Propeptides lie at residues 197–208 (SPQLEDEAKELQ) and 218–228 (VGRPEWWMDYQ). Residue Ser252 is modified to Phosphoserine.

Belongs to the opioid neuropeptide precursor family. In terms of processing, proenkephalin-A is cleaved by CTSL to generate Met-enkephalin. Processed and degraded by ACE. Post-translationally, probably cleaved by ACE. In terms of processing, processed by ACE to generate Met-enkephalin in the nucleus accumbens of the brain. The N-terminal domain contains 6 conserved cysteines thought to be involved in disulfide bonding and/or processing. As to expression, spermatogenic and somatic cells.

It is found in the cytoplasmic vesicle. It localises to the secretory vesicle. The protein localises to the chromaffin granule lumen. Its subcellular location is the secreted. In terms of biological role, neuropeptide that competes with and mimic the effects of opiate drugs. They play a role in a number of physiologic functions, including pain perception and responses to stress. Met-enkephalin-Arg-Phe neuropeptide acts as a strong ligand of Mu-type opioid receptor OPRM1. Met-enkephalin-Arg-Phe-binding to OPRM1 in the nucleus accumbens of the brain increases activation of OPRM1, leading to long-term synaptic depression of glutamate release. Its function is as follows. Increases glutamate release in the striatum and decreases GABA concentration in the striatum. Functionally, increases glutamate release in the striatum. In Mus musculus (Mouse), this protein is Proenkephalin-A (Penk).